Here is a 183-residue protein sequence, read N- to C-terminus: Mid1-interacting protein 1 (183 aa).

At Met-1 the chain carries N-acetylmethionine. Phosphoserine occurs at positions 75 and 79.

It belongs to the SPOT14 family. Homodimer in the absence of THRSP. Heterodimer with THRSP. The homodimer interacts with ACACA and ACACB. Promotes polymerization of Acetyl-CoA carboxylase to form complexes that contain MID1IP1 and ACACA and/or ACACB. Interaction with THRSP interferes with ACACA binding.

It is found in the nucleus. The protein localises to the cytoplasm. It localises to the cytoskeleton. Its function is as follows. Plays a role in the regulation of lipogenesis in liver. Up-regulates ACACA enzyme activity. Required for efficient lipid biosynthesis, including triacylglycerol, diacylglycerol and phospholipid. Involved in stabilization of microtubules. In Homo sapiens (Human), this protein is Mid1-interacting protein 1 (MID1IP1).